The chain runs to 442 residues: UDP-N-acetylmuramate--L-alanine ligase (442 aa).

109-115 contributes to the ATP binding site; sequence GAHGKTS.

It belongs to the MurCDEF family.

Its subcellular location is the cytoplasm. It carries out the reaction UDP-N-acetyl-alpha-D-muramate + L-alanine + ATP = UDP-N-acetyl-alpha-D-muramoyl-L-alanine + ADP + phosphate + H(+). It participates in cell wall biogenesis; peptidoglycan biosynthesis. Its function is as follows. Cell wall formation. In Streptococcus pyogenes serotype M2 (strain MGAS10270), this protein is UDP-N-acetylmuramate--L-alanine ligase.